We begin with the raw amino-acid sequence, 367 residues long: rRNA processing protein RCL1 (367 aa).

Ser-2 carries the N-acetylserine modification.

It belongs to the RNA 3'-terminal cyclase family. Type 2 subfamily. As to quaternary structure, interacts directly with BMS1 and the U3 snoRNA to form a stable subcomplex. Component of the 90S small subunit processome also known as 90S pre-ribosome that consists of the 35S pre-rRNA, early-associating ribosomal proteins most of which are part of the small ribosomal subunit, the U3 snoRNA and associated proteins.

Its subcellular location is the nucleus. It localises to the nucleolus. Does not have cyclase activity. Plays a role in 40S-ribosomal-subunit biogenesis in the early pre-rRNA processing steps at sites A0, A1 and A2 that are required for proper maturation of the 18S RNA. RCL1 activates BMS1 by promoting GDP/GTP exchange. This Saccharomyces cerevisiae (strain ATCC 204508 / S288c) (Baker's yeast) protein is rRNA processing protein RCL1 (RCL1).